Here is a 197-residue protein sequence, read N- to C-terminus: Small ribosomal subunit protein uS4c (197 aa).

The S4 RNA-binding domain occupies 82–143 (MRLDNILFRL…KQRSKALIQN (62 aa)).

This sequence belongs to the universal ribosomal protein uS4 family. Part of the 30S ribosomal subunit. Contacts protein S5. The interaction surface between S4 and S5 is involved in control of translational fidelity.

The protein localises to the plastid. The protein resides in the chloroplast. Its function is as follows. One of the primary rRNA binding proteins, it binds directly to 16S rRNA where it nucleates assembly of the body of the 30S subunit. Functionally, with S5 and S12 plays an important role in translational accuracy. In Gladiolus papilio (Goldblotch gladiolus), this protein is Small ribosomal subunit protein uS4c (rps4).